Here is a 370-residue protein sequence, read N- to C-terminus: 4-hydroxy-3-methylbut-2-en-1-yl diphosphate synthase (flavodoxin) (370 aa).

Residues Cys-270, Cys-273, Cys-305, and Glu-312 each coordinate [4Fe-4S] cluster.

It belongs to the IspG family. [4Fe-4S] cluster is required as a cofactor.

The enzyme catalyses (2E)-4-hydroxy-3-methylbut-2-enyl diphosphate + oxidized [flavodoxin] + H2O + 2 H(+) = 2-C-methyl-D-erythritol 2,4-cyclic diphosphate + reduced [flavodoxin]. The protein operates within isoprenoid biosynthesis; isopentenyl diphosphate biosynthesis via DXP pathway; isopentenyl diphosphate from 1-deoxy-D-xylulose 5-phosphate: step 5/6. Converts 2C-methyl-D-erythritol 2,4-cyclodiphosphate (ME-2,4cPP) into 1-hydroxy-2-methyl-2-(E)-butenyl 4-diphosphate. This Hahella chejuensis (strain KCTC 2396) protein is 4-hydroxy-3-methylbut-2-en-1-yl diphosphate synthase (flavodoxin).